The sequence spans 304 residues: GTPase Era (304 aa).

Positions 9 to 176 (KSGFVSIIGR…LLEITKHLSE (168 aa)) constitute an Era-type G domain. The G1 stretch occupies residues 17-24 (GRPNVGKS). 17 to 24 (GRPNVGKS) is a binding site for GTP. Residues 43–47 (QTTRN) are G2. Positions 64–67 (DTPG) are G3. Residues 64 to 68 (DTPGI) and 126 to 129 (NKID) contribute to the GTP site. The tract at residues 126–129 (NKID) is G4. A G5 region spans residues 155 to 157 (VSA). The KH type-2 domain maps to 199–285 (IREKVLHLTR…FLELWVKVQK (87 aa)).

Belongs to the TRAFAC class TrmE-Era-EngA-EngB-Septin-like GTPase superfamily. Era GTPase family. As to quaternary structure, monomer.

The protein localises to the cytoplasm. Its subcellular location is the cell membrane. In terms of biological role, an essential GTPase that binds both GDP and GTP, with rapid nucleotide exchange. Plays a role in 16S rRNA processing and 30S ribosomal subunit biogenesis and possibly also in cell cycle regulation and energy metabolism. The protein is GTPase Era of Halalkalibacterium halodurans (strain ATCC BAA-125 / DSM 18197 / FERM 7344 / JCM 9153 / C-125) (Bacillus halodurans).